The primary structure comprises 395 residues: Chalcone synthase (395 aa).

Val-2 carries the N-acetylvaline modification. Cys-169 is a catalytic residue.

The protein belongs to the thiolase-like superfamily. Chalcone/stilbene synthases family.

The catalysed reaction is (E)-4-coumaroyl-CoA + 3 malonyl-CoA + 3 H(+) = 2',4,4',6'-tetrahydroxychalcone + 3 CO2 + 4 CoA. The protein operates within secondary metabolite biosynthesis; flavonoid biosynthesis. In terms of biological role, the primary product of this enzyme is 4,2',4',6'-tetrahydroxychalcone (also termed naringenin-chalcone or chalcone) which can under specific conditions spontaneously isomerize into naringenin. This chain is Chalcone synthase (CHS), found in Cardamine amara (Large bitter-cress).